An 87-amino-acid chain; its full sequence is Class II metallothionein-like protein 1A (87 aa).

It belongs to the metallothionein superfamily. Type 15 family. In terms of tissue distribution, expressed in developing seeds.

Functionally, metallothioneins have a high content of cysteine residues that bind various heavy metals. The sequence is that of Class II metallothionein-like protein 1A (MT21A) from Oryza sativa subsp. japonica (Rice).